We begin with the raw amino-acid sequence, 106 residues long: MNGRNNDMGRNGGADYDDRDFGRTPDLNADAPGRRRTGRKRVCRYCADKALVIDYKDPQALKYFISERGKVVPRRISGNCARHQRKVTLSIKRARNIALLPFTVTA.

The disordered stretch occupies residues 1-39 (MNGRNNDMGRNGGADYDDRDFGRTPDLNADAPGRRRTGR).

Belongs to the bacterial ribosomal protein bS18 family. In terms of assembly, part of the 30S ribosomal subunit. Forms a tight heterodimer with protein bS6.

Its function is as follows. Binds as a heterodimer with protein bS6 to the central domain of the 16S rRNA, where it helps stabilize the platform of the 30S subunit. The chain is Small ribosomal subunit protein bS18 from Sorangium cellulosum (strain So ce56) (Polyangium cellulosum (strain So ce56)).